The chain runs to 238 residues: NAD(P)H-hydrate epimerase (238 aa).

A YjeF N-terminal domain is found at 11–217 (AAALDKDLMS…EIHQKYNLQL (207 aa)). Position 61–65 (61–65 (NNGGD)) interacts with (6S)-NADPHX. 2 residues coordinate K(+): N62 and D123. Residues 127-133 (GFSFTGS) and D156 contribute to the (6S)-NADPHX site. A K(+)-binding site is contributed by S159.

This sequence belongs to the NnrE/AIBP family. Requires K(+) as cofactor.

Its subcellular location is the cytoplasm. It is found in the mitochondrion. The catalysed reaction is (6R)-NADHX = (6S)-NADHX. It carries out the reaction (6R)-NADPHX = (6S)-NADPHX. In terms of biological role, catalyzes the epimerization of the S- and R-forms of NAD(P)HX, a damaged form of NAD(P)H that is a result of enzymatic or heat-dependent hydration. This is a prerequisite for the S-specific NAD(P)H-hydrate dehydratase to allow the repair of both epimers of NAD(P)HX. In Sclerotinia sclerotiorum (strain ATCC 18683 / 1980 / Ss-1) (White mold), this protein is NAD(P)H-hydrate epimerase.